We begin with the raw amino-acid sequence, 503 residues long: Maturase K (503 aa).

It belongs to the intron maturase 2 family. MatK subfamily.

The protein resides in the plastid. The protein localises to the chloroplast. In terms of biological role, usually encoded in the trnK tRNA gene intron. Probably assists in splicing its own and other chloroplast group II introns. The sequence is that of Maturase K from Cercocarpus betuloides (Mountain mahogany).